A 273-amino-acid chain; its full sequence is Dermonecrotic toxin LapSicTox-alphaIB1aiv (273 aa).

Histidine 5 is a catalytic residue. Glutamate 25 and aspartate 27 together coordinate Mg(2+). The active-site Nucleophile is the histidine 41. Cystine bridges form between cysteine 45-cysteine 51 and cysteine 47-cysteine 190. Aspartate 85 is a Mg(2+) binding site. Asparagine 250 is a glycosylation site (N-linked (GlcNAc...) asparagine).

The protein belongs to the arthropod phospholipase D family. Class II subfamily. Mg(2+) is required as a cofactor. As to expression, expressed by the venom gland.

It is found in the secreted. It carries out the reaction an N-(acyl)-sphingosylphosphocholine = an N-(acyl)-sphingosyl-1,3-cyclic phosphate + choline. It catalyses the reaction an N-(acyl)-sphingosylphosphoethanolamine = an N-(acyl)-sphingosyl-1,3-cyclic phosphate + ethanolamine. The enzyme catalyses a 1-acyl-sn-glycero-3-phosphocholine = a 1-acyl-sn-glycero-2,3-cyclic phosphate + choline. The catalysed reaction is a 1-acyl-sn-glycero-3-phosphoethanolamine = a 1-acyl-sn-glycero-2,3-cyclic phosphate + ethanolamine. Functionally, dermonecrotic toxins cleave the phosphodiester linkage between the phosphate and headgroup of certain phospholipids (sphingolipid and lysolipid substrates), forming an alcohol (often choline) and a cyclic phosphate. This toxin acts on sphingomyelin (SM). It may also act on ceramide phosphoethanolamine (CPE), lysophosphatidylcholine (LPC) and lysophosphatidylethanolamine (LPE), but not on lysophosphatidylserine (LPS), and lysophosphatidylglycerol (LPG). It acts by transphosphatidylation, releasing exclusively cyclic phosphate products as second products. Induces dermonecrosis, hemolysis, increased vascular permeability, edema, inflammatory response, and platelet aggregation. In Loxosceles apachea (Apache recluse spider), this protein is Dermonecrotic toxin LapSicTox-alphaIB1aiv.